A 267-amino-acid chain; its full sequence is MSTKSYSERAAAHRSPVAAKLLNLMEEKKSNLCASLDVRKTAELLRLVEVLGPYICLLKTHVDILEDFSFENTIVPLKQLAEKHKFLIFEDRKFADIGNTVKLQYTSGVYRIAEWSDITNAHGVTGAGIVAGLKQGAEEVTKEPRGLLMLAELSSKGSLAHGEYTRGTVEIAKSDKDFVIGFIAQNDMGGREEGYDWLIMTPGVGLDDKGDALGQQYRTVDEVVAGGSDIIIVGRGLFAKGRDPVVEGERYRKAGWDAYLKRVGRSA.

Substrate contacts are provided by residues Asp-37, 59–61 (KTH), 91–100 (DRKFADIGNT), Tyr-217, and Arg-235. Lys-93 acts as the Proton donor in catalysis.

The protein belongs to the OMP decarboxylase family.

It carries out the reaction orotidine 5'-phosphate + H(+) = UMP + CO2. It functions in the pathway pyrimidine metabolism; UMP biosynthesis via de novo pathway; UMP from orotate: step 2/2. In Kluyveromyces marxianus (Yeast), this protein is Orotidine 5'-phosphate decarboxylase (URA3).